The chain runs to 151 residues: Large ribosomal subunit protein bL9 (151 aa).

This sequence belongs to the bacterial ribosomal protein bL9 family.

Its function is as follows. Binds to the 23S rRNA. The sequence is that of Large ribosomal subunit protein bL9 from Prochlorococcus marinus (strain MIT 9312).